The primary structure comprises 190 residues: Protein PLANT CADMIUM RESISTANCE 10 (190 aa).

2 consecutive transmembrane segments (helical) span residues 78 to 98 and 108 to 125; these read LLGS…WALV and GALL…ACGY.

Belongs to the cornifelin family.

Its subcellular location is the membrane. Its function is as follows. May be involved in cadmium resistance. The chain is Protein PLANT CADMIUM RESISTANCE 10 (PCR10) from Arabidopsis thaliana (Mouse-ear cress).